Here is a 129-residue protein sequence, read N- to C-terminus: Large ribosomal subunit protein bL17 (129 aa).

The protein belongs to the bacterial ribosomal protein bL17 family. As to quaternary structure, part of the 50S ribosomal subunit. Contacts protein L32.

This chain is Large ribosomal subunit protein bL17, found in Polynucleobacter asymbioticus (strain DSM 18221 / CIP 109841 / QLW-P1DMWA-1) (Polynucleobacter necessarius subsp. asymbioticus).